Consider the following 467-residue polypeptide: Thiohydroximate-O-sulfate sulfur/sulfate-lyase (nitrile-forming) NSP3 (467 aa).

The Jacalin-type lectin domain occupies 2–143 (AQKLVAQGGE…LHSLGAYVSL (142 aa)). Kelch repeat units lie at residues 177–225 (KIYS…VRMV), 230–276 (TLYT…SMAA), 280–329 (NVYV…VVQG), 331–375 (VWIV…ASAA), and 379–434 (HIVI…ASTT). Arg237 acts as the Proton donor in catalysis. A (Z)-N-(sulfonatooxy)alkanimidothioate is bound by residues Arg237, Ser270, Arg292, Gly321, and Val370. Arg292 functions as the Proton donor in the catalytic mechanism. Fe(2+)-binding residues include Glu386, Asp390, and His394. Trp429 contacts a (Z)-N-(sulfonatooxy)alkanimidothioate.

Belongs to the jacalin lectin family. The cofactor is Fe(2+). Mainly expressed in roots, and, at low levels, in seedlings and leaves. Observed in seeds.

The catalysed reaction is a (Z)-N-(sulfonatooxy)alkanimidothioate = a nitrile + sulfur + sulfate. It carries out the reaction (Z)-phenyl-N-(sulfonatooxy)methanimidothioate = phenylacetonitrile + sulfur + sulfate. It catalyses the reaction (Z)-N-(sulfonatooxy)prop-2-enimidothioate = but-3-enenitrile + sulfur + sulfate. Functionally, specifier protein responsible for constitutive and herbivore-induced simple nitrile formation, especially in roots. Promotes simple nitriles, but not epithionitrile or thiocyanate formation. Converts allylglucosinolate and benzylglucosinolate (glucotropaeolin) to their corresponding simple nitriles in the presence of myrosinase. In Arabidopsis thaliana (Mouse-ear cress), this protein is Thiohydroximate-O-sulfate sulfur/sulfate-lyase (nitrile-forming) NSP3.